We begin with the raw amino-acid sequence, 674 residues long: Protein asunder (674 aa).

Residues 516-538 (HKAKDQYRLLYRELEQLIQLNAS) adopt a coiled-coil conformation. The Nuclear localization signal (NLS) motif lies at 601–607 (LKASKRR).

This sequence belongs to the Integrator subunit 13 family. Belongs to the multiprotein complex Integrator, at least composed of IntS1, IntS2, IntS3, IntS4, omd/IntS5, IntS6, defl/IntS7, IntS8, IntS9, IntS10, IntS11, IntS12, asun/IntS13, IntS14 and IntS15. The core complex associates with protein phosphatase 2A subunits mts/PP2A and Pp2A-29B, to form the Integrator-PP2A (INTAC) complex. In terms of processing, phosphorylated.

It is found in the nucleus. It localises to the cytoplasm. The protein resides in the perinuclear region. Its function is as follows. Component of the integrator complex, a multiprotein complex that terminates RNA polymerase II (Pol II) transcription in the promoter-proximal region of genes. The integrator complex provides a quality checkpoint during transcription elongation by driving premature transcription termination of transcripts that are unfavorably configured for transcriptional elongation: the complex terminates transcription by (1) catalyzing dephosphorylation of the C-terminal domain (CTD) of Pol II subunit Polr2A/Rbp1 and Spt5, and (2) degrading the exiting nascent RNA transcript via endonuclease activity. The integrator complex is also involved in the 3'-end processing of the U7 snRNA, and also the spliceosomal snRNAs U1, U2, U4 and U5. This is Protein asunder (asun) from Drosophila persimilis (Fruit fly).